Here is a 640-residue protein sequence, read N- to C-terminus: Probable potassium transport system protein Kup 2 (640 aa).

The interval 1–20 (MTADIAATPAETPATNGHGD) is disordered. The next 12 membrane-spanning stretches (helical) occupy residues 30 to 50 (LTLG…LYAL), 71 to 91 (VVSL…VVIL), 117 to 137 (ASII…DAVI), 155 to 175 (AAFD…LFAV), 183 to 203 (VAAF…IAAF), 224 to 244 (FMLH…LAVT), 265 to 285 (WLFV…ALVI), 294 to 314 (PFFL…ATVA), 363 to 383 (LLLV…ALAS), 385 to 405 (YGIS…VVIW), 410 to 430 (WSPI…LTFL), and 437 to 457 (VLEG…LMYT).

It belongs to the HAK/KUP transporter (TC 2.A.72) family.

It localises to the cell inner membrane. It catalyses the reaction K(+)(in) + H(+)(in) = K(+)(out) + H(+)(out). Functionally, transport of potassium into the cell. Likely operates as a K(+):H(+) symporter. This is Probable potassium transport system protein Kup 2 from Bradyrhizobium sp. (strain ORS 278).